The chain runs to 229 residues: Peptidase E (229 aa).

Catalysis depends on charge relay system residues serine 120, aspartate 135, and histidine 157.

Belongs to the peptidase S51 family.

Its subcellular location is the cytoplasm. It catalyses the reaction Dipeptidase E catalyzes the hydrolysis of dipeptides Asp-|-Xaa. It does not act on peptides with N-terminal Glu, Asn or Gln, nor does it cleave isoaspartyl peptides.. In terms of biological role, hydrolyzes dipeptides containing N-terminal aspartate residues. May play a role in allowing the cell to use peptide aspartate to spare carbon otherwise required for the synthesis of the aspartate family of amino acids. The sequence is that of Peptidase E (pepE) from Salmonella typhimurium (strain LT2 / SGSC1412 / ATCC 700720).